Reading from the N-terminus, the 49-residue chain is Light-harvesting protein B-875 beta chain (49 aa).

At 2-27 (ADKSDLGYTGLTDEQAQELHSVYMSG) the chain is on the cytoplasmic side. Residues His21 and His39 each contribute to the a bacteriochlorophyll site. Residues 28–45 (LWLFSAVAIVAHLAVYIW) traverse the membrane as a helical; Signal-anchor for type II membrane protein segment. At 46-49 (RPWF) the chain is on the periplasmic side.

It belongs to the antenna complex beta subunit family. The core complex is formed by different alpha and beta chains, binding bacteriochlorophyll molecules, and arranged most probably in tetrameric structures disposed around the reaction center. The non-pigmented gamma chains may constitute additional components.

It localises to the cell inner membrane. Its function is as follows. Antenna complexes are light-harvesting systems, which transfer the excitation energy to the reaction centers. The sequence is that of Light-harvesting protein B-875 beta chain (pufB) from Cereibacter sphaeroides (strain ATCC 17023 / DSM 158 / JCM 6121 / CCUG 31486 / LMG 2827 / NBRC 12203 / NCIMB 8253 / ATH 2.4.1.) (Rhodobacter sphaeroides).